A 588-amino-acid chain; its full sequence is Adenine deaminase (588 aa).

Belongs to the metallo-dependent hydrolases superfamily. Adenine deaminase family. As to quaternary structure, homodimer. Requires Mn(2+) as cofactor.

It catalyses the reaction adenine + H2O + H(+) = hypoxanthine + NH4(+). This chain is Adenine deaminase, found in Escherichia coli O9:H4 (strain HS).